Here is a 423-residue protein sequence, read N- to C-terminus: MPEVKVPELAESITEGTIAEWLKNLGDSVEKGEAILELETDKVNVEVVSEEAGVLSEQLASEGDTVEVGQAIAVIGEGSGNASKENSNDNTPQQNDETTNNKKEETTNKSADKAEVNQTNDDNQQRVNATPSARRYARENGVNLAEVSPKTNDVVRKEDIDKKQQAPASTQTTQQAPAKEEKKYNQYPTKPVIREKMSRRKKTAAKKLLEVSNNTAMLTTFNEVDMTNVMELRKRKKEQFMKDHDGTKLGFMSFFTKASVAALKKYPEVNAEIDGDDMITKQYYDIGVAVSTDDGLLVPFVRDCDKKNFAEIEAEIANLAVKAREKKLGLDDMVNGSFTITNGGIFGSMMSTPIINGNQAAILGMHSIITRPIAIDQDTIENRPMMYIALSYDHRIIDGKEAVGFLKTIKELIENPEDLLLES.

The Lipoyl-binding domain maps to 1–76; that stretch reads MPEVKVPELA…EVGQAIAVIG (76 aa). N6-lipoyllysine is present on lysine 42. The interval 76 to 185 is disordered; the sequence is GEGSGNASKE…APAKEEKKYN (110 aa). Positions 80 to 96 are enriched in polar residues; it reads GNASKENSNDNTPQQND. Over residues 99-115 the composition is skewed to basic and acidic residues; the sequence is TNNKKEETTNKSADKAE. A compositionally biased stretch (polar residues) spans 116-131; it reads VNQTNDDNQQRVNATP. Residues 128–164 enclose the Peripheral subunit-binding (PSBD) domain; that stretch reads NATPSARRYARENGVNLAEVSPKTNDVVRKEDIDKKQ. Residues 153 to 164 show a composition bias toward basic and acidic residues; the sequence is DVVRKEDIDKKQ. Over residues 165-177 the composition is skewed to low complexity; it reads QAPASTQTTQQAP. Active-site residues include histidine 394 and aspartate 398.

This sequence belongs to the 2-oxoacid dehydrogenase family. In terms of assembly, forms a 24-polypeptide structural core with octahedral symmetry. Part of the 2-oxoglutarate dehydrogenase (OGDH) complex composed of E1 (2-oxoglutarate dehydrogenase), E2 (dihydrolipoamide succinyltransferase) and E3 (dihydrolipoamide dehydrogenase); the complex contains multiple copies of the three enzymatic components (E1, E2 and E3). It depends on (R)-lipoate as a cofactor.

It catalyses the reaction N(6)-[(R)-dihydrolipoyl]-L-lysyl-[protein] + succinyl-CoA = N(6)-[(R)-S(8)-succinyldihydrolipoyl]-L-lysyl-[protein] + CoA. The protein operates within amino-acid degradation; L-lysine degradation via saccharopine pathway; glutaryl-CoA from L-lysine: step 6/6. Its function is as follows. E2 component of the 2-oxoglutarate dehydrogenase (OGDH) complex which catalyzes the second step in the conversion of 2-oxoglutarate to succinyl-CoA and CO(2). The protein is Dihydrolipoyllysine-residue succinyltransferase component of 2-oxoglutarate dehydrogenase complex (odhB) of Staphylococcus aureus (strain MRSA252).